A 374-amino-acid polypeptide reads, in one-letter code: MEKNEISEERRTQEKEKQHGHRLNIRRLGRKELTELLTRLGEPAYRANQLHRWLYSNQALRFEEMSTLSKQLRQKLASEWIIHPASLVGTERETTDASLVTGNPTAKFLIKLEDNELVESVLIPSEERITACISSQIGCPLRCTFCATGHMGFRRNLTASEITDQVFLLEKEAQKRHWRGLTNIVFMGMGEPLLNLDNVLESIGTLTEKDYQFSISERKITISTVGLPVEMDRIARSGLKTKLAISLHSADQLIRERMMPIAADITLDKLAKAINSYNSVTSQPVTLVYMLLEGINDSPEDARKLVRFAKRVLCKINLIDYNSIVTLKFKPGCSSSKTMFIQQLLDAGLLVTVRKSQGATINAACGQLATRPVR.

Residues 1–17 (MEKNEISEERRTQEKEK) show a composition bias toward basic and acidic residues. The disordered stretch occupies residues 1–22 (MEKNEISEERRTQEKEKQHGHR). Glutamate 119 (proton acceptor) is an active-site residue. Residues 125–360 (SEERITACIS…VTVRKSQGAT (236 aa)) enclose the Radical SAM core domain. A disulfide bridge connects residues cysteine 132 and cysteine 365. [4Fe-4S] cluster is bound by residues cysteine 139, cysteine 143, and cysteine 146. Residues 190–191 (GE), serine 223, 246–248 (SLH), and asparagine 322 each bind S-adenosyl-L-methionine. Cysteine 365 acts as the S-methylcysteine intermediate in catalysis.

It belongs to the radical SAM superfamily. RlmN family. [4Fe-4S] cluster is required as a cofactor.

It is found in the cytoplasm. The catalysed reaction is adenosine(2503) in 23S rRNA + 2 reduced [2Fe-2S]-[ferredoxin] + 2 S-adenosyl-L-methionine = 2-methyladenosine(2503) in 23S rRNA + 5'-deoxyadenosine + L-methionine + 2 oxidized [2Fe-2S]-[ferredoxin] + S-adenosyl-L-homocysteine. It catalyses the reaction adenosine(37) in tRNA + 2 reduced [2Fe-2S]-[ferredoxin] + 2 S-adenosyl-L-methionine = 2-methyladenosine(37) in tRNA + 5'-deoxyadenosine + L-methionine + 2 oxidized [2Fe-2S]-[ferredoxin] + S-adenosyl-L-homocysteine. In terms of biological role, specifically methylates position 2 of adenine 2503 in 23S rRNA and position 2 of adenine 37 in tRNAs. The sequence is that of Probable dual-specificity RNA methyltransferase RlmN from Chlorobaculum tepidum (strain ATCC 49652 / DSM 12025 / NBRC 103806 / TLS) (Chlorobium tepidum).